The primary structure comprises 475 residues: Ras-GEF domain-containing family member 1A (475 aa).

The N-terminal Ras-GEF domain maps to 33-164; that stretch reads QDGSLVSGSL…SISQMTQNVL (132 aa). Residues 208–455 enclose the Ras-GEF domain; it reads DPLILAQQLT…FLASFENEGP (248 aa).

Guanine nucleotide exchange factor (GEF) with specificity for rap2a and other Ras family proteins (in vitro). Plays a role in cell migration. The sequence is that of Ras-GEF domain-containing family member 1A (rasgef1a) from Xenopus tropicalis (Western clawed frog).